The following is a 184-amino-acid chain: TATA-box-binding protein (184 aa).

Tandem repeats lie at residues 9-85 (IENI…IDKL) and 100-178 (VQNI…KKEL).

It belongs to the TBP family.

Its function is as follows. General factor that plays a role in the activation of archaeal genes transcribed by RNA polymerase. Binds specifically to the TATA box promoter element which lies close to the position of transcription initiation. The protein is TATA-box-binding protein of Thermoplasma volcanium (strain ATCC 51530 / DSM 4299 / JCM 9571 / NBRC 15438 / GSS1).